Reading from the N-terminus, the 73-residue chain is Conotoxin Vc6.17 (73 aa).

A signal peptide spans 1 to 19 (MQKLIILLLVAAVLMSTQA). The propeptide occupies 20 to 44 (LFQEKRRKEKIDLLSKRKTDAEKQH). 3 cysteine pairs are disulfide-bonded: C48–C62, C55–C66, and C61–C71.

It belongs to the conotoxin O2 superfamily. In terms of tissue distribution, expressed by the venom duct.

It is found in the secreted. In terms of biological role, inhibits voltage-gated ion channels. The protein is Conotoxin Vc6.17 of Conus victoriae (Queen Victoria cone).